A 352-amino-acid chain; its full sequence is Protein RecA (352 aa).

ATP is bound at residue 67 to 74 (GPESSGKT).

Belongs to the RecA family.

It is found in the cytoplasm. Can catalyze the hydrolysis of ATP in the presence of single-stranded DNA, the ATP-dependent uptake of single-stranded DNA by duplex DNA, and the ATP-dependent hybridization of homologous single-stranded DNAs. It interacts with LexA causing its activation and leading to its autocatalytic cleavage. This is Protein RecA from Aggregatibacter actinomycetemcomitans (Actinobacillus actinomycetemcomitans).